We begin with the raw amino-acid sequence, 826 residues long: Arf-GAP with ANK repeat and PH domain-containing protein cnt-1 (826 aa).

Residues 275-373 enclose the PH domain; that stretch reads DVMMEGYLYK…WMRALQRTIL (99 aa). The region spanning 447–572 is the Arf-GAP domain; it reads TTAFEQVRRV…RFAVAEDTRA (126 aa). The C4-type zinc finger occupies 462–485; sequence CADCGSPAPKWVSINLGVVLCIEC. The disordered stretch occupies residues 570 to 604; it reads TRARSSATNRQEHLKHKTSIGGNSSSNGVNRSSSY. Positions 588-603 are enriched in low complexity; that stretch reads SIGGNSSSNGVNRSSS. ANK repeat units lie at residues 690 to 719, 723 to 752, and 756 to 789; these read NGTT…KINM, KLNT…DSNL, and DSKT…NADF.

In terms of assembly, interacts (via C-terminal ankyrin repeat) with rab-10 (GTP-bound form); the interaction is required for cnt-1 recruitment to endosomes. Interacts (via C-terminal ankyrin repeat) with rab-8 (GTP-bound form) and rab-35 (GTP-bound form). Cleaved by caspase ced-3 after Asp-382 and Asp-609. Cleavage at Asp-382 is required for subsequent cleavage at Asp-609.

The protein localises to the cytoplasm. It localises to the recycling endosome membrane. Its subcellular location is the basolateral cell membrane. It is found in the apical cell membrane. The protein resides in the cell membrane. Its function is as follows. GTPase-activating protein for the ADP ribosylation factor family. Regulates endosome recycling downstream of rab-10 and upstream of arf-6. In terms of biological role, promotes apoptosis during embryonic development. Produced by caspase ced-3-mediated cleavage, and translocates to the plasma membrane where it prevents the activation of the prosurvival Akt-1/2 and sgk-1 signaling pathway by competing with Akt-1/2 for the binding to PtdIns(3,4,5)P3. The sequence is that of Arf-GAP with ANK repeat and PH domain-containing protein cnt-1 from Caenorhabditis elegans.